The following is a 140-amino-acid chain: Immunity protein RhsIC (140 aa).

Functionally, putative immunity protein component of a toxin-immunity protein module, which may function as a cellular contact-dependent growth inhibition (CDI) system. Blocks the toxic effects of expression of the C-terminus (residues 1519-1658) of cognate toxin RhsC in E.coli. The polypeptide is Immunity protein RhsIC (rhsIC) (Dickeya dadantii (strain 3937) (Erwinia chrysanthemi (strain 3937))).